We begin with the raw amino-acid sequence, 792 residues long: Probable exo-1,4-beta-xylosidase xlnD (792 aa).

The signal sequence occupies residues 1-20 (MSVAKSIAAVLVALLPGALA). N-linked (GlcNAc...) asparagine glycosylation is found at N23, N87, N118, N142, and N246. Residue D310 is part of the active site. N-linked (GlcNAc...) asparagine glycans are attached at residues N326, N385, N404, N440, N477, N518, N679, and N701.

The protein belongs to the glycosyl hydrolase 3 family.

The protein resides in the secreted. It catalyses the reaction Hydrolysis of (1-&gt;4)-beta-D-xylans, to remove successive D-xylose residues from the non-reducing termini.. It functions in the pathway glycan degradation; xylan degradation. In terms of biological role, xylan 1,4-beta-xylosidase involved in the hydrolysis of xylan, a major structural heterogeneous polysaccharide found in plant biomass representing the second most abundant polysaccharide in the biosphere, after cellulose. In Aspergillus fumigatus (strain ATCC MYA-4609 / CBS 101355 / FGSC A1100 / Af293) (Neosartorya fumigata), this protein is Probable exo-1,4-beta-xylosidase xlnD (xlnD).